A 437-amino-acid polypeptide reads, in one-letter code: MAVSKVYARSVYDSRGNPTVEVELTTEKGVFRSIVPSGASTGIHEALEMRDGDKSKWLGKGVENAVKNVNDVIAPAFVKANVDIKDQKAVDDLLLSLDGTANKSKLGANAILGVSMAAARAAAAEKNVPLYQHLADLSDSKTSPFVLPVPFLNVLNGGSHAGGALALQEFMIAPTGAKSFREAMRIGSEVYHNLKSLTKKRYGSSAGNVGDEGGVAPDIQTAEEALDLIVDAIKAAGHEGKVKIGLDCASSEFFKDGKYDLDFKNPNSDASKWLSGPQLADLYHSLVKKYPIVSIEDPFAEDDWEAWSHFFKTAGVQIVADDLTVTNPKRIATAIEKKAADALLLKVNQIGSLSESIKAAQDSFAAGWGVMVSHRSGETEDTFIADLVVGLRTGQIKTGAPARSERLAKLNQLLRIEEELGDKAVYAGDNFHHGFKL.

2 residues coordinate substrate: H160 and E169. Catalysis depends on E212, which acts as the Proton donor. Mg(2+) is bound by residues D247, E296, and D321. Positions 296 and 321 each coordinate substrate. K346 functions as the Proton acceptor in the catalytic mechanism. Residues 373–376 and K397 contribute to the substrate site; that span reads SHRS.

It belongs to the enolase family. As to quaternary structure, homodimer. Mg(2+) is required as a cofactor.

Its subcellular location is the cytoplasm. It catalyses the reaction (2R)-2-phosphoglycerate = phosphoenolpyruvate + H2O. It functions in the pathway carbohydrate degradation; glycolysis; pyruvate from D-glyceraldehyde 3-phosphate: step 4/5. This is Enolase 2 (ENO2) from Candida glabrata (strain ATCC 2001 / BCRC 20586 / JCM 3761 / NBRC 0622 / NRRL Y-65 / CBS 138) (Yeast).